Consider the following 237-residue polypeptide: uncharacterized protein (237 aa).

This is an uncharacterized protein from Dictyostelium discoideum (Social amoeba).